We begin with the raw amino-acid sequence, 270 residues long: Glutamate racemase (270 aa).

Residues 13–14 (DS) and 45–46 (YG) each bind substrate. The active-site Proton donor/acceptor is Cys77. 78-79 (NT) contributes to the substrate binding site. Cys185 functions as the Proton donor/acceptor in the catalytic mechanism. Substrate is bound at residue 186–187 (TH).

It belongs to the aspartate/glutamate racemases family.

It catalyses the reaction L-glutamate = D-glutamate. It functions in the pathway cell wall biogenesis; peptidoglycan biosynthesis. Functionally, provides the (R)-glutamate required for cell wall biosynthesis. The protein is Glutamate racemase of Vibrio parahaemolyticus serotype O3:K6 (strain RIMD 2210633).